We begin with the raw amino-acid sequence, 336 residues long: Fructose-1,6-bisphosphatase class 1 (336 aa).

4 residues coordinate Mg(2+): Glu-92, Asp-115, Leu-117, and Asp-118. Residues 118–121, Asn-211, Tyr-244, 262–264, and Lys-274 each bind substrate; these read DGSS and YLY. Residue Glu-280 participates in Mg(2+) binding.

It belongs to the FBPase class 1 family. Homotetramer. Mg(2+) serves as cofactor.

It is found in the cytoplasm. The enzyme catalyses beta-D-fructose 1,6-bisphosphate + H2O = beta-D-fructose 6-phosphate + phosphate. Its pathway is carbohydrate biosynthesis; gluconeogenesis. The sequence is that of Fructose-1,6-bisphosphatase class 1 from Vibrio cholerae serotype O1 (strain ATCC 39315 / El Tor Inaba N16961).